A 355-amino-acid polypeptide reads, in one-letter code: Histidine biosynthesis bifunctional protein HisB (355 aa).

Positions 1-166 (MKQKILFIDR…DITKEIIKRN (166 aa)) are histidinol-phosphatase. Residue Asp-9 is the Nucleophile of the active site. Positions 9 and 11 each coordinate Mg(2+). The active-site Proton donor is Asp-11. Zn(2+)-binding residues include Cys-93, His-95, Cys-101, and Cys-103. Position 130 (Asp-130) interacts with Mg(2+). Residues 167 to 355 (RYREVIRETK…NTLPTSKGIL (189 aa)) are imidazoleglycerol-phosphate dehydratase.

It in the N-terminal section; belongs to the histidinol-phosphatase family. In the C-terminal section; belongs to the imidazoleglycerol-phosphate dehydratase family. The cofactor is Mg(2+). Requires Zn(2+) as cofactor.

It is found in the cytoplasm. It catalyses the reaction D-erythro-1-(imidazol-4-yl)glycerol 3-phosphate = 3-(imidazol-4-yl)-2-oxopropyl phosphate + H2O. The catalysed reaction is L-histidinol phosphate + H2O = L-histidinol + phosphate. It functions in the pathway amino-acid biosynthesis; L-histidine biosynthesis; L-histidine from 5-phospho-alpha-D-ribose 1-diphosphate: step 6/9. Its pathway is amino-acid biosynthesis; L-histidine biosynthesis; L-histidine from 5-phospho-alpha-D-ribose 1-diphosphate: step 8/9. The chain is Histidine biosynthesis bifunctional protein HisB from Buchnera aphidicola subsp. Schizaphis graminum (strain Sg).